The chain runs to 312 residues: MTTKRKVAIVGSGNVGTDLMIKILRNAEHLEMAVMVGIDPASDGLARAGRMGVATTHEGVAGLVKMPEFADVDFVFDATSAGAHVKNDALLRATKPGIRVIDLTPAAIGPYCVPVVNLEQHVNAENLNMVTCGGQATIPMVAAVSRVAKVHYAEIVASIASKSAGPGTRANIDEFTETTSKAIEAIGGAAKGKAIIIMNPAEPPLMMRDTVYVLSEAADQDHVEASIEEMVAAVNAYVPGYRLKQKVQFEVIPDTAPLNIPGHGEFSGLKTSVFIEVEGAAHYLPAYAGNLDIMTSAALATAERMAQSMSQA.

Residue 12–15 participates in NAD(+) binding; it reads SGNV. Cys-132 serves as the catalytic Acyl-thioester intermediate. NAD(+) contacts are provided by residues 163 to 171 and Asn-290; that span reads SAGPGTRAN.

It belongs to the acetaldehyde dehydrogenase family.

It carries out the reaction acetaldehyde + NAD(+) + CoA = acetyl-CoA + NADH + H(+). This chain is Acetaldehyde dehydrogenase (cbzQ), found in Pseudomonas putida (Arthrobacter siderocapsulatus).